The primary structure comprises 698 residues: Superoxide-generating NADPH oxidase heavy chain subunit B (698 aa).

Disordered regions lie at residues 1 to 68 and 134 to 158; these read MNEK…NITP and NDQVNSNTDNNNNTNNNNNTNNNKN. The Cytoplasmic segment spans residues 1–184; that stretch reads MNEKKELQQE…KIRGWWWHRG (184 aa). Composition is skewed to polar residues over residues 16–25 and 33–53; these read FQTPKNQQLE and EISSTGNETSESGISSPPISQ. Low complexity-rich tracts occupy residues 54–65 and 138–156; these read NDNSNNENESLN and NSNTDNNNNTNNNNNTNNN. A helical membrane pass occupies residues 185 to 205; that stretch reads ISTYIMLFYIALNIGVGVHMF. The Extracellular segment spans residues 206–229; the sequence is YNMYHSDIFKFLGLSFCFSRTAAR. In terms of domain architecture, Ferric oxidoreductase spans 225–375; sequence RTAARLINLN…LFIPFYILLC (151 aa). A helical membrane pass occupies residues 230–250; that stretch reads LINLNSAVILLPVLRNFLSWL. Residues 251–269 are Cytoplasmic-facing; sequence RGTIVNNYIPIDKHLNFHK. 2 residues coordinate heme: His-268 and His-282. A helical membrane pass occupies residues 270 to 290; it reads LCAFMLFCCTIIHCVGHYISF. Residues 291-324 lie on the Extracellular side of the membrane; it reads KKINDDVLKIDDGKSVAGDYLNININNFPDEKYL. A helical transmembrane segment spans residues 325-345; the sequence is FFKSVPGITGHIMLLILILIV. Over 346 to 355 the chain is Cytoplasmic; sequence SSSMWRIRRP. A helical membrane pass occupies residues 356-376; that stretch reads MFEIFWYVHHLFIPFYILLCF. His-364 and His-377 together coordinate heme. Residues 377–388 are Extracellular-facing; that stretch reads HGYSKILKKDPQ. Residues 389–409 form a helical membrane-spanning segment; that stretch reads SWMWIIAPFILYSIERLIRIA. In terms of domain architecture, FAD-binding FR-type spans 404–528; that stretch reads RLIRIARSKK…DGPFGAPAEN (125 aa). Topologically, residues 410–698 are cytoplasmic; the sequence is RSKKRVILEK…CHLIFHKENF (289 aa). An FAD-binding site is contributed by 460–466; that stretch reads HPFTITS.

Composed of a heavy chain and a light chain. FAD serves as cofactor.

The protein resides in the membrane. Its function is as follows. Critical component of the membrane-bound oxidase that generates superoxide. It is the terminal component of a respiratory chain that transfers single electrons from cytoplasmic NADPH across the plasma membrane to molecular oxygen on the exterior. In Dictyostelium discoideum (Social amoeba), this protein is Superoxide-generating NADPH oxidase heavy chain subunit B (noxB).